Consider the following 1166-residue polypeptide: Serine/threonine-protein kinase BRI1-like 1 (1166 aa).

Positions Met1–Gly21 are cleaved as a signal peptide. Residues Ile22–Thr776 are Extracellular-facing. An N-linked (GlcNAc...) asparagine glycan is attached at Asn33. The short motif at Cys66–Cys73 is the Cys pair 1 element. 20 LRR repeats span residues Arg78–Thr99, Asn103–Asp124, Tyr126–Phe147, Asn152–Ser173, Ser176–Ser197, Ser202–Ile224, Asn227–Pro248, Phe252–Gly274, Asn278–Leu300, Thr303–Cys325, Trp327–Lys349, Gly352–Ser375, Asn376–Ser397, Val403–Lys424, Ser427–Leu449, Asn451–Lys473, Asn476–Cys498, Asn500–Leu522, Lys524–Lys547, and Ser548–Gln570. The N-linked (GlcNAc...) asparagine glycan is linked to Asn97. Residue Asn157 is glycosylated (N-linked (GlcNAc...) asparagine). N-linked (GlcNAc...) asparagine glycans are attached at residues Asn212, Asn227, Asn237, and Asn257. Asn362 and Asn373 each carry an N-linked (GlcNAc...) asparagine glycan. Asn451 and Asn461 each carry an N-linked (GlcNAc...) asparagine glycan. Residues Asn521, Asn532, Asn558, and Asn638 are each glycosylated (N-linked (GlcNAc...) asparagine). LRR repeat units lie at residues Tyr664–Leu686, Ala688–Leu710, and Phe712–Thr734. 2 N-linked (GlcNAc...) asparagine glycosylation sites follow: Asn722 and Asn743. The Cys pair 2 motif lies at Cys748–Cys755. The helical transmembrane segment at Ala777–Tyr797 threads the bilayer. At Arg798–Pro1166 the chain is on the cytoplasmic side. Residues Thr848 and Thr856 each carry the phosphothreonine modification. Positions Phe859–Leu1147 constitute a Protein kinase domain. Residues Val865–Val873 and Lys887 contribute to the ATP site. The residue at position 932 (Tyr932) is a Phosphotyrosine. The Proton acceptor role is filled by Asp987. A Phosphoserine modification is found at Ser1022. Position 1030 is a phosphotyrosine (Tyr1030). Thr1141 bears the Phosphothreonine mark. The tract at residues Glu1142–Pro1166 is disordered.

It belongs to the protein kinase superfamily. Ser/Thr protein kinase family. Predominantly expressed in vascular tissues. From 7 day old seedlings, it is expressed in the columella cells of the root tip, in the vascular initials in the meristematic region of the root and in vascular tissues. After germination, it is expressed in the stele cell and in the early differentiation zone of the root, where the expression continues from the root to the hypocotyls and cotyledons following the midvein. In mature plants, it is expressed in the vasculature of the leaf, predominantly in the midvein, and in the vascular bundles of inflorescence stems. Localizes to procambial cells of the vascular bundles located between the differentiating xylem and the phloem.

It is found in the cell membrane. The catalysed reaction is L-seryl-[protein] + ATP = O-phospho-L-seryl-[protein] + ADP + H(+). It carries out the reaction L-threonyl-[protein] + ATP = O-phospho-L-threonyl-[protein] + ADP + H(+). Its function is as follows. Receptor with a serine/threonine-protein kinase activity. Regulates, in response to brassinosteroid binding, a signaling cascade involved in plant development. Binds brassinolide. May be involved in cell growth and vascular differentiation. This Arabidopsis thaliana (Mouse-ear cress) protein is Serine/threonine-protein kinase BRI1-like 1 (BRL1).